The following is a 581-amino-acid chain: Chaperonin GroEL 1 (581 aa).

ATP contacts are provided by residues 29 to 32 (TIGP), 86 to 90 (DGTTT), G413, and D492. The disordered stretch occupies residues 522-543 (PEPEPAAPGGPSGDPMGGMGGM). Positions 531–543 (GPSGDPMGGMGGM) are enriched in gly residues.

It belongs to the chaperonin (HSP60) family. In terms of assembly, forms a cylinder of 14 subunits composed of two heptameric rings stacked back-to-back. Interacts with the co-chaperonin GroES.

It is found in the cytoplasm. The enzyme catalyses ATP + H2O + a folded polypeptide = ADP + phosphate + an unfolded polypeptide.. In terms of biological role, together with its co-chaperonin GroES, plays an essential role in assisting protein folding. The GroEL-GroES system forms a nano-cage that allows encapsulation of the non-native substrate proteins and provides a physical environment optimized to promote and accelerate protein folding. This Prochlorococcus marinus (strain MIT 9215) protein is Chaperonin GroEL 1.